Reading from the N-terminus, the 59-residue chain is Beta-defensin 134 (59 aa).

Residues 1–19 (MKPLLVVFVFLFLWDPVLA) form the signal peptide. Intrachain disulfides connect Cys-25-Cys-51, Cys-31-Cys-45, and Cys-35-Cys-52.

The protein belongs to the beta-defensin family.

It is found in the secreted. In terms of biological role, has antibacterial activity. The sequence is that of Beta-defensin 134 (DEFB134) from Pan troglodytes (Chimpanzee).